The sequence spans 298 residues: Glutamyl-Q tRNA(Asp) synthetase (298 aa).

L-glutamate contacts are provided by residues 9–13 (RFAPS) and Glu-45. The 'HIGH' region motif lies at 12-22 (PSPSGELHFGS). The Zn(2+) site is built by Cys-101, Cys-103, Tyr-115, and Cys-119. L-glutamate contacts are provided by Tyr-172 and Arg-190. Positions 228 to 232 (KLSKQ) match the 'KMSKS' region motif. Lys-231 contacts ATP.

It belongs to the class-I aminoacyl-tRNA synthetase family. GluQ subfamily. The cofactor is Zn(2+).

Catalyzes the tRNA-independent activation of glutamate in presence of ATP and the subsequent transfer of glutamate onto a tRNA(Asp). Glutamate is transferred on the 2-amino-5-(4,5-dihydroxy-2-cyclopenten-1-yl) moiety of the queuosine in the wobble position of the QUC anticodon. The sequence is that of Glutamyl-Q tRNA(Asp) synthetase from Cronobacter sakazakii (strain ATCC BAA-894) (Enterobacter sakazakii).